A 579-amino-acid polypeptide reads, in one-letter code: MQDQKQAVKRVTGAFALIDSLRRHGVQHIFGYPGGSNLPIYDEIYRAEQAGEIKHYLVRHEQGAAHAADGYARSTGKVGVCLATSGPGATNLVTGLATAYLDSVPVLAITGQVPRSALGTDAFQEIDIFGITLPIVKHSYLVREPSELPRIVVEAFHLAMSGRPGPVLIDIPKDVGNAQIDYIPVEPGSVRRVGYRPTERGNPRQINQALQLISEATKPLLYVGGGAIMAGAHAEIAELSERFQIPVTSTLMGKGRFDENHPLSLGIVGMLGMHGTAYANFAVMELDFVIAVGVRFDDRVAGTGDQFAHSAKVIHIDIDPAEVGKNRSTDVPIVGDVRQVLGDMLQRTYHWERKLSRNKPRNGTDLNQLREPIPLTVPHPEDGISPQDGDWELSHQCPDAFYTTDVGQHQMWAGQFVQNGPRRWMTSGGLGTMGYGLPAAVGVKVAHPHDTVTCISGDGSFQMNMQELGTIAQYGIGVKVIILNNGWLGMVRQWQHMFYNDRYEATNLEDGTPEFARLADVYGLEAMNVRQRKIYQRRLPKALSHKGPMILDVRVTRDEDCYPMVAPGHDNSDMMGLSS.

Residue glutamate 61 participates in thiamine diphosphate binding. FAD is bound by residues arginine 163, 274 to 295, and 317 to 336; these read HGTA…VGVR and DIDP…IVGD. The segment at 408-487 is thiamine pyrophosphate binding; it reads QHQMWAGQFV…VKVIILNNGW (80 aa). Mg(2+) is bound by residues aspartate 458 and asparagine 485.

Belongs to the TPP enzyme family. The cofactor is Mg(2+). Thiamine diphosphate is required as a cofactor.

The enzyme catalyses 2 pyruvate + H(+) = (2S)-2-acetolactate + CO2. The protein operates within amino-acid biosynthesis; L-isoleucine biosynthesis; L-isoleucine from 2-oxobutanoate: step 1/4. Its pathway is amino-acid biosynthesis; L-valine biosynthesis; L-valine from pyruvate: step 1/4. The chain is Acetolactate synthase (ilvY) from Arthrospira platensis (Spirulina platensis).